The sequence spans 297 residues: MTQETFTATTRVKRGLADMLKGGVIMDVVTPEQARIAEDAGASAVMALERVPADIRAQGGVARMSDPDLIEGIVNAVSIPVMAKARIGHFVEAQILESLGVDFIDESEVLSPADYVNHIDKWNFDVPFVCGATNLGEALRRITEGAAMIRSKGEAGTGDVSEAVKHLRTIRGEINRLRSMDEDQLYVAAKEIQAPYDLVREVAATGKLPVTLFVAGGVATPADAALVMQMGAEGVFVGSGIFKSGNPAARAAAIVKATTMYDDPAAIAEVSRGLGEAMVGINVADVPAPHRLAERGW.

Residue D27 participates in D-ribose 5-phosphate binding. K84 functions as the Schiff-base intermediate with D-ribose 5-phosphate in the catalytic mechanism. Residue G156 participates in D-ribose 5-phosphate binding. Position 168 (R168) interacts with D-glyceraldehyde 3-phosphate. D-ribose 5-phosphate is bound by residues G217 and G238–S239.

This sequence belongs to the PdxS/SNZ family. In terms of assembly, in the presence of PdxT, forms a dodecamer of heterodimers.

It catalyses the reaction aldehydo-D-ribose 5-phosphate + D-glyceraldehyde 3-phosphate + L-glutamine = pyridoxal 5'-phosphate + L-glutamate + phosphate + 3 H2O + H(+). It functions in the pathway cofactor biosynthesis; pyridoxal 5'-phosphate biosynthesis. Its function is as follows. Catalyzes the formation of pyridoxal 5'-phosphate from ribose 5-phosphate (RBP), glyceraldehyde 3-phosphate (G3P) and ammonia. The ammonia is provided by the PdxT subunit. Can also use ribulose 5-phosphate and dihydroxyacetone phosphate as substrates, resulting from enzyme-catalyzed isomerization of RBP and G3P, respectively. The protein is Pyridoxal 5'-phosphate synthase subunit PdxS of Corynebacterium diphtheriae (strain ATCC 700971 / NCTC 13129 / Biotype gravis).